Reading from the N-terminus, the 393-residue chain is MTVPDKRKDLMIVNMGPQHPSMHGVLRLIVTLDGEDVIDCEPVLGYLHRGMEKIAENRTIIQYLPYVTRWDYLATMFTEAITVNAPEQLGNIQVPKRASYIRVIMLELSRIASHLLWLGPFMADIGAQTPFFYIFRERELIYDLFEAATGMRMMHNFFRIGGVAADLPHGWIDKCLDFCDYFLTGVVEYQKLITRNPIFLERVEGVGIIGGEEAINWGLSGPMLRASGIPWDLRKVDHYESYDEFDWEIQWQKEGDSLARYLVRINEMIESIKIIQQVLEGIPGGPYENLEVRRFARPKDSEWNDFEYRFISKKPSPSFELSKQELYVRVEAPKGELGVFLIGDNSVFPWRWKIRPPGFINLQILPQLVKRMKLADIMTILGSIDIIMGEVDR.

This sequence belongs to the complex I 49 kDa subunit family. As to quaternary structure, NDH is composed of at least 16 different subunits, 5 of which are encoded in the nucleus.

It localises to the plastid. Its subcellular location is the chloroplast thylakoid membrane. The catalysed reaction is a plastoquinone + NADH + (n+1) H(+)(in) = a plastoquinol + NAD(+) + n H(+)(out). It carries out the reaction a plastoquinone + NADPH + (n+1) H(+)(in) = a plastoquinol + NADP(+) + n H(+)(out). Functionally, NDH shuttles electrons from NAD(P)H:plastoquinone, via FMN and iron-sulfur (Fe-S) centers, to quinones in the photosynthetic chain and possibly in a chloroplast respiratory chain. The immediate electron acceptor for the enzyme in this species is believed to be plastoquinone. Couples the redox reaction to proton translocation, and thus conserves the redox energy in a proton gradient. This chain is NAD(P)H-quinone oxidoreductase subunit H, chloroplastic, found in Ceratophyllum demersum (Rigid hornwort).